Consider the following 133-residue polypeptide: MRHRKSGRQLNRNSSHRQAMFKNMAGSLVKHEVIKTTLPKAKELRRVIEPLITMAKEDSVANRRLAFARTGDKEVVGKLFNELGPRYEARPGGYTRILKCGFRAGDNAPMAYVELVDRPVVEAEEEAVEATEE.

The protein belongs to the bacterial ribosomal protein bL17 family. As to quaternary structure, part of the 50S ribosomal subunit. Contacts protein L32.

The sequence is that of Large ribosomal subunit protein bL17 from Alteromonas mediterranea (strain DSM 17117 / CIP 110805 / LMG 28347 / Deep ecotype).